A 321-amino-acid polypeptide reads, in one-letter code: 1D-myo-inositol 2-acetamido-2-deoxy-alpha-D-glucopyranoside deacetylase (321 aa).

3 residues coordinate Zn(2+): His-15, Asp-18, and His-150. The tract at residues 280–321 is disordered; the sequence is PEGERESDLFAGLPPATDGTGAAGAPSATGAANPADAEGGAA. Residues 290–321 are compositionally biased toward low complexity; that stretch reads AGLPPATDGTGAAGAPSATGAANPADAEGGAA.

Belongs to the MshB deacetylase family. Zn(2+) serves as cofactor.

The catalysed reaction is 1D-myo-inositol 2-acetamido-2-deoxy-alpha-D-glucopyranoside + H2O = 1D-myo-inositol 2-amino-2-deoxy-alpha-D-glucopyranoside + acetate. Catalyzes the deacetylation of 1D-myo-inositol 2-acetamido-2-deoxy-alpha-D-glucopyranoside (GlcNAc-Ins) in the mycothiol biosynthesis pathway. The chain is 1D-myo-inositol 2-acetamido-2-deoxy-alpha-D-glucopyranoside deacetylase from Streptomyces griseus subsp. griseus (strain JCM 4626 / CBS 651.72 / NBRC 13350 / KCC S-0626 / ISP 5235).